We begin with the raw amino-acid sequence, 829 residues long: Trimethylamine-N-oxide reductase (829 aa).

Positions Met1 to Ala31 form a signal peptide, tat-type signal. Ser180 contributes to the Mo-bis(molybdopterin guanine dinucleotide) binding site.

Belongs to the prokaryotic molybdopterin-containing oxidoreductase family. It depends on Mo-bis(molybdopterin guanine dinucleotide) as a cofactor. In terms of processing, predicted to be exported by the Tat system. The position of the signal peptide cleavage has been experimentally proven.

It is found in the periplasm. The catalysed reaction is trimethylamine + 2 Fe(III)-[cytochrome c] + H2O = trimethylamine N-oxide + 2 Fe(II)-[cytochrome c] + 3 H(+). Functionally, reduces trimethylamine-N-oxide (TMAO) into trimethylamine; an anaerobic reaction coupled to energy-yielding reactions. In Shewanella massilia, this protein is Trimethylamine-N-oxide reductase (torA).